The following is a 435-amino-acid chain: uncharacterized protein (435 aa).

Positions 7–58 constitute an F-box domain; the sequence is PFPITKLPLVPRCKILKFFDYGDLLDISLCSKRMAQTVRDIHITADLHYLTL.

This is an uncharacterized protein from Caenorhabditis elegans.